A 1174-amino-acid chain; its full sequence is MITIDGNGAVASVAFRTSEVIAIYPITPSSTMAEQADAWAGNGLKNVWGDTPRVVEMQSEAGAIATVHGALQTGALSTSFTSSQGLLLMIPTLYKLAGELTPFVLHVAARTVATHALSIFGDHSDVMAVRQTGCAMLCAANVQEAQDFALISQIATLKSRVPFIHFFDGFRTSHEINKIVPLADDTILDLMPQVEIDAHRARALNPEHPVIRGTSANPDTYFQSREATNPWYNAVYDHVEQAMNDFSAATGRQYQPFEYYGHPQAERVIILMGSAIGTCEEVVDELLTRGEKVGVLKVRLYRPFSAKHLLQALPGSVRSVAVLDRTKEPGAQAEPLYLDVMTALAEAFNNGERETLPRVIGGRYGLSSKEFGPDCVLAVFAELNAAKPKARFTVGIYDDVTNLSLPLPENTLPNSAKLEALFYGLGSDGSVSATKNNIKIIGNSTPWYAQGYFVYDSKKAGGLTVSHLRVSEQPIRSAYLISQADFVGCHQLQFIDKYQMAERLKPGGIFLLNTPYSADEVWSRLPQEVQAVLNQKKARFYVINAAKIARECGLAARINTVMQMAFFHLTQILPGDSALAELQGAIAKSYSSKGQDLVERNWQALALARESVEEVPLQPVNPHSANRPPVVSDAAPDFVKTVTAAMLAGLGDALPVSALPPDGTWPMGTTRWEKRNIAEEIPIWKEELCTQCNHCVAACPHSAIRAKVVPPEAMENAPASLHSLDVKSRDMRGQKYVLQVAPEDCTGCNLCVEVCPAKDRQNPEIKAINMMSRLEHVEEEKINYDFFLNLPEIDRSKLERIDIRTSQLITPLFEYSGACSGCGETPYIKLLTQLYGDRMLIANATGCSSIYGGNLPSTPYTTDANGRGPAWANSLFEDNAEFGLGFRLTVDQHRVRVLRLLDQFADKIPAELLTALKSDATPEVRREQVAALRQQLNDVAEAHELLRDADALVEKSIWLIGGDGWAYDIGFGGLDHVLSLTENVNILVLDTQCYSNTGGQASKATPLGAVTKFGEHGKRKARKDLGVSMMMYGHVYVAQISLGAQLNQTVKAIQEAEAYPGPSLIIAYSPCEEHGYDLALSHDQMRQLTATGFWPLYRFDPRRADEGKLPLALDSRPPSEAPEETLLHEQRFRRLNSQQPEVAEQLWKDAAADLQKRYDFLAQMAGKAEKSNTD.

2 consecutive 4Fe-4S ferredoxin-type domains span residues 680 to 709 (EIPIWKEELCTQCNHCVAACPHSAIRAKVV) and 736 to 765 (YVLQVAPEDCTGCNLCVEVCPAKDRQNPEI). [4Fe-4S] cluster contacts are provided by Cys689, Cys692, Cys695, Cys699, Cys745, Cys748, Cys751, Cys755, Cys819, Cys822, Cys847, and Cys1071.

It belongs to the pyruvate:ferredoxin/flavodoxin oxidoreductase family. [4Fe-4S] cluster serves as cofactor.

It catalyses the reaction oxidized [flavodoxin] + pyruvate + CoA + 2 H(+) = reduced [flavodoxin] + acetyl-CoA + CO2. Its function is as follows. Oxidoreductase required for the transfer of electrons from pyruvate to flavodoxin. This is Probable pyruvate-flavodoxin oxidoreductase (ydbK) from Escherichia coli (strain K12).